The following is a 1042-amino-acid chain: Isoleucine--tRNA ligase (1042 aa).

Residues 48–58 (PFATGLPHFGH) carry the 'HIGH' region motif. Positions 594-598 (KMSKS) match the 'KMSKS' region motif. ATP is bound at residue lysine 597.

This sequence belongs to the class-I aminoacyl-tRNA synthetase family. IleS type 2 subfamily. Monomer. Requires Zn(2+) as cofactor.

The protein resides in the cytoplasm. The catalysed reaction is tRNA(Ile) + L-isoleucine + ATP = L-isoleucyl-tRNA(Ile) + AMP + diphosphate. In terms of biological role, catalyzes the attachment of isoleucine to tRNA(Ile). As IleRS can inadvertently accommodate and process structurally similar amino acids such as valine, to avoid such errors it has two additional distinct tRNA(Ile)-dependent editing activities. One activity is designated as 'pretransfer' editing and involves the hydrolysis of activated Val-AMP. The other activity is designated 'posttransfer' editing and involves deacylation of mischarged Val-tRNA(Ile). The sequence is that of Isoleucine--tRNA ligase from Borreliella burgdorferi (strain ZS7) (Borrelia burgdorferi).